The primary structure comprises 542 residues: Ribulokinase 2 (542 aa).

Belongs to the ribulokinase family.

It carries out the reaction D-ribulose + ATP = D-ribulose 5-phosphate + ADP + H(+). It catalyses the reaction L-ribulose + ATP = L-ribulose 5-phosphate + ADP + H(+). Its pathway is carbohydrate degradation; L-arabinose degradation via L-ribulose; D-xylulose 5-phosphate from L-arabinose (bacterial route): step 2/3. The chain is Ribulokinase 2 from Staphylococcus saprophyticus subsp. saprophyticus (strain ATCC 15305 / DSM 20229 / NCIMB 8711 / NCTC 7292 / S-41).